Here is a 428-residue protein sequence, read N- to C-terminus: Anaerobic glycerol-3-phosphate dehydrogenase subunit B (428 aa).

The protein belongs to the anaerobic G-3-P dehydrogenase subunit B family. In terms of assembly, composed of a catalytic GlpA/B dimer and of membrane bound GlpC. FMN is required as a cofactor.

The catalysed reaction is a quinone + sn-glycerol 3-phosphate = dihydroxyacetone phosphate + a quinol. It functions in the pathway polyol metabolism; glycerol degradation via glycerol kinase pathway; glycerone phosphate from sn-glycerol 3-phosphate (anaerobic route): step 1/1. Functionally, conversion of glycerol 3-phosphate to dihydroxyacetone. Uses fumarate or nitrate as electron acceptor. The protein is Anaerobic glycerol-3-phosphate dehydrogenase subunit B of Actinobacillus pleuropneumoniae serotype 5b (strain L20).